The primary structure comprises 460 residues: Probable glucan endo-1,3-beta-glucosidase eglC (460 aa).

Positions 1–18 are cleaved as a signal peptide; it reads MQLAQLAAFAMTLATSEA. Catalysis depends on Glu128, which acts as the Proton donor. A glycan (N-linked (GlcNAc...) asparagine) is linked at Asn183. The Nucleophile role is filled by Glu239. N-linked (GlcNAc...) asparagine glycosylation is found at Asn312, Asn367, and Asn373. The interval 379-437 is disordered; the sequence is RPSGSASARPSAGAISSGSGSSSSGSGSSGSTGTSATSGQSSSSGSSAAAGSSSPAAFS. Positions 380–437 are enriched in low complexity; it reads PSGSASARPSAGAISSGSGSSSSGSGSSGSTGTSATSGQSSSSGSSAAAGSSSPAAFS. A lipid anchor (GPI-anchor amidated serine) is attached at Ser430. Positions 431 to 460 are cleaved as a propeptide — removed in mature form; the sequence is SSPAAFSGASTLSGSLFGAVVAVFMTLAAL.

The protein belongs to the glycosyl hydrolase 17 family. The GPI-anchor is attached to the protein in the endoplasmic reticulum and serves to target the protein to the cell surface. There, the glucosamine-inositol phospholipid moiety is cleaved off and the GPI-modified mannoprotein is covalently attached via its lipidless GPI glycan remnant to the 1,6-beta-glucan of the outer cell wall layer.

Its subcellular location is the cell membrane. The protein resides in the secreted. It is found in the cell wall. The catalysed reaction is Hydrolysis of (1-&gt;3)-beta-D-glucosidic linkages in (1-&gt;3)-beta-D-glucans.. Functionally, glucanases play a role in cell expansion during growth, in cell-cell fusion during mating, and in spore release during sporulation. This enzyme may be involved in beta-glucan degradation and also function biosynthetically as a transglycosylase. The polypeptide is Probable glucan endo-1,3-beta-glucosidase eglC (eglC) (Aspergillus niger (strain ATCC MYA-4892 / CBS 513.88 / FGSC A1513)).